We begin with the raw amino-acid sequence, 396 residues long: Apolipoprotein A-IV (396 aa).

The N-terminal stretch at 1–20 (MFLKAVVLTLALVAVAGARA) is a signal peptide. Repeat copies occupy residues 33-54 (DYFS…KSEL), 60-81 (ALFQ…KKLV), 82-103 (PFAT…EEIG), 115-136 (PHAN…QRLE), 137-158 (PYAD…RQLT), 159-180 (PYAQ…ASLR), 181-202 (PHAD…GRLT), 203-224 (PYAD…RSLA), 225-246 (PYAQ…FQMK), 247-268 (KNAE…QRLA), 269-286 (PLAE…EGLQ), 287-308 (KSLA…RRVE), and 309-330 (PYGE…QKLG). The interval 33–330 (DYFSQLSNNA…QMEQLRQKLG (298 aa)) is 13 X 22 AA approximate tandem repeats. Positions 361-396 (KESQDKTLSLPELEQQQEQQQEQQQEQVQMLAPLES) are disordered. The segment covering 374–389 (EQQQEQQQEQQQEQVQ) has biased composition (low complexity).

The protein belongs to the apolipoprotein A1/A4/E family. Homodimer. In terms of processing, phosphorylation sites are present in the extracellular medium. Synthesized primarily in the intestine and secreted in plasma.

Its subcellular location is the secreted. Its function is as follows. May have a role in chylomicrons and VLDL secretion and catabolism. Required for efficient activation of lipoprotein lipase by ApoC-II; potent activator of LCAT. Apoa-IV is a major component of HDL and chylomicrons. This chain is Apolipoprotein A-IV, found in Homo sapiens (Human).